The following is a 238-amino-acid chain: Uridylate kinase (238 aa).

Position 12–15 (12–15 (KLSG)) interacts with ATP. Gly-54 provides a ligand contact to UMP. ATP-binding residues include Gly-55 and Arg-59. UMP-binding positions include Asp-74 and 135 to 142 (TGNPYFST). 2 residues coordinate ATP: Tyr-168 and Asp-171.

Belongs to the UMP kinase family. Homohexamer.

It is found in the cytoplasm. It catalyses the reaction UMP + ATP = UDP + ADP. It functions in the pathway pyrimidine metabolism; CTP biosynthesis via de novo pathway; UDP from UMP (UMPK route): step 1/1. Its activity is regulated as follows. Inhibited by UTP. In terms of biological role, catalyzes the reversible phosphorylation of UMP to UDP. This chain is Uridylate kinase, found in Syntrophomonas wolfei subsp. wolfei (strain DSM 2245B / Goettingen).